Here is a 116-residue protein sequence, read N- to C-terminus: Venom nerve growth factor (116 aa).

3 disulfide bridges follow: Cys-14–Cys-78, Cys-56–Cys-106, and Cys-66–Cys-108.

Belongs to the NGF-beta family. In terms of assembly, homodimer; non-covalently linked. In terms of processing, not glycosylated. In terms of tissue distribution, expressed by the venom gland.

The protein resides in the secreted. In terms of biological role, nerve growth factor is important for the development and maintenance of the sympathetic and sensory nervous systems. It stimulates division and differentiation of sympathetic and embryonic sensory neurons as well as basal forebrain cholinergic neurons in the brain. Its relevance in the snake venom is not clear. However, it has been shown to inhibit metalloproteinase-dependent proteolysis of platelet glycoprotein Ib alpha, suggesting a metalloproteinase inhibition to prevent metalloprotease autodigestion and/or protection against prey proteases. Binds a lipid between the two protein chains in the homodimer. The lipid-bound form promotes histamine relase from mouse mast cells, contrary to the lipid-free form. This chain is Venom nerve growth factor, found in Naja naja (Indian cobra).